Here is a 276-residue protein sequence, read N- to C-terminus: Putative metal-binding protein CT_415 (276 aa).

Residues 1–18 (MRLLFLLLFSLGITCSYG) form the signal peptide. His-59, His-121, His-185, and Asp-256 together coordinate a divalent metal cation.

It belongs to the bacterial solute-binding protein 9 family.

It is found in the periplasm. Part of an ATP-binding cassette (ABC) transport system involved in metal import. Binds a metal with high affinity and specificity and delivers it to the membrane permease for translocation into the cytoplasm. The polypeptide is Putative metal-binding protein CT_415 (Chlamydia trachomatis serovar D (strain ATCC VR-885 / DSM 19411 / UW-3/Cx)).